A 162-amino-acid polypeptide reads, in one-letter code: Peroxiredoxin-2 (162 aa).

Positions 4 to 162 (IAVGDVLPDG…SSADDILKDL (159 aa)) constitute a Thioredoxin domain. Cys51 acts as the Cysteine sulfenic acid (-SOH) intermediate in catalysis.

This sequence belongs to the peroxiredoxin family. Prx5 subfamily. Monomer. Homodimer. Glutathionylation of C(P) causes the dimer to dissociate. Subsequent reduction of the mixed disulfide bond leads again to dimerization.

It carries out the reaction [glutaredoxin]-dithiol + a hydroperoxide = [glutaredoxin]-disulfide + an alcohol + H2O. Its function is as follows. Thiol-specific peroxidase that catalyzes the reduction of hydrogen peroxide and organic hydroperoxides to water and alcohols, respectively. Can reduce H(2)O(2) and short chain organic, fatty acid, and phospholipid hydroperoxides. Plays a role in cell protection against oxidative stress by detoxifying peroxides. This Populus trichocarpa (Western balsam poplar) protein is Peroxiredoxin-2.